A 1533-amino-acid chain; its full sequence is Glycogen debranching enzyme (1533 aa).

Serine 64 carries the phosphoserine modification. Catalysis depends on residues aspartate 527, histidine 530, and aspartate 628.

This sequence belongs to the glycogen debranching enzyme family. Monomer. Interacts with NHLRC1/malin. Ubiquitinated. In terms of tissue distribution, ubiquitous. Expressed in striated skeletal muscle, heart, liver, spleen, skin, spinal cord, lung, kidney and testicle.

It is found in the cytoplasm. The enzyme catalyses Transfers a segment of a (1-&gt;4)-alpha-D-glucan to a new position in an acceptor, which may be glucose or a (1-&gt;4)-alpha-D-glucan.. It catalyses the reaction Hydrolysis of (1-&gt;6)-alpha-D-glucosidic branch linkages in glycogen phosphorylase limit dextrin.. Its function is as follows. Multifunctional enzyme acting as 1,4-alpha-D-glucan:1,4-alpha-D-glucan 4-alpha-D-glycosyltransferase and amylo-1,6-glucosidase in glycogen degradation. This Equus caballus (Horse) protein is Glycogen debranching enzyme.